A 98-amino-acid chain; its full sequence is Large ribosomal subunit protein bL27 (98 aa).

Residues 1-11 (MASKASGGSTR) show a composition bias toward polar residues. Residues 1 to 20 (MASKASGGSTRNGRDSISKR) are disordered.

It belongs to the bacterial ribosomal protein bL27 family.

The polypeptide is Large ribosomal subunit protein bL27 (Aquifex aeolicus (strain VF5)).